A 385-amino-acid polypeptide reads, in one-letter code: cAMP-dependent protein kinase, catalytic subunit-like (385 aa).

A Protein kinase domain is found at 63 to 317 (LERIVTIGKG…TQDVKDHKWF (255 aa)). ATP is bound by residues 69–77 (IGKGTFGRV) and K92. The active-site Proton acceptor is the D186. An AGC-kinase C-terminal domain is found at 318-385 (EKVNWDDTLH…QRERDLFAEW (68 aa)).

This sequence belongs to the protein kinase superfamily. Ser/Thr protein kinase family. cAMP subfamily.

It catalyses the reaction L-seryl-[protein] + ATP = O-phospho-L-seryl-[protein] + ADP + H(+). The catalysed reaction is L-threonyl-[protein] + ATP = O-phospho-L-threonyl-[protein] + ADP + H(+). This Caenorhabditis briggsae protein is cAMP-dependent protein kinase, catalytic subunit-like.